The following is a 60-amino-acid chain: UPF0181 protein ESA_01442 (60 aa).

Belongs to the UPF0181 family.

The polypeptide is UPF0181 protein ESA_01442 (Cronobacter sakazakii (strain ATCC BAA-894) (Enterobacter sakazakii)).